We begin with the raw amino-acid sequence, 375 residues long: Digeranylgeranylglycerophospholipid reductase 1 (375 aa).

FAD-binding residues include Ala-13, Glu-32, Cys-43, Ala-44, Gly-46, Arg-92, Ala-116, Asp-275, Gly-287, and Leu-288. Gly-367 serves as a coordination point for a 2,3-bis-O-(geranylgeranyl)-sn-glycerol 1-phospholipid.

Belongs to the geranylgeranyl reductase family. DGGGPL reductase subfamily. The cofactor is FAD.

It carries out the reaction a 2,3-bis-O-phytanyl-sn-glycerol 1-phospholipid + 8 A = a 2,3-bis-O-(geranylgeranyl)-sn-glycerol 1-phospholipid + 8 AH2. The catalysed reaction is 2,3-bis-O-(phytanyl)-sn-glycerol 1-phosphate + 8 A = 2,3-bis-O-(geranylgeranyl)-sn-glycerol 1-phosphate + 8 AH2. The enzyme catalyses CDP-2,3-bis-O-(geranylgeranyl)-sn-glycerol + 8 AH2 = CDP-2,3-bis-O-(phytanyl)-sn-glycerol + 8 A. It catalyses the reaction archaetidylserine + 8 AH2 = 2,3-bis-O-phytanyl-sn-glycero-3-phospho-L-serine + 8 A. Its pathway is membrane lipid metabolism; glycerophospholipid metabolism. Its function is as follows. Is involved in the reduction of 2,3-digeranylgeranylglycerophospholipids (unsaturated archaeols) into 2,3-diphytanylglycerophospholipids (saturated archaeols) in the biosynthesis of archaeal membrane lipids. Catalyzes the formation of archaetidic acid (2,3-di-O-phytanyl-sn-glyceryl phosphate) from 2,3-di-O-geranylgeranylglyceryl phosphate (DGGGP) via the hydrogenation of each double bond of the isoprenoid chains. Is also probably able to reduce double bonds of geranyl groups in CDP-2,3-bis-O-(geranylgeranyl)-sn-glycerol and archaetidylserine, thus acting at various stages in the biosynthesis of archaeal membrane lipids. In Methanopyrus kandleri (strain AV19 / DSM 6324 / JCM 9639 / NBRC 100938), this protein is Digeranylgeranylglycerophospholipid reductase 1.